A 734-amino-acid polypeptide reads, in one-letter code: MATKFPKFSQALSQDPTTRRIWYGIATAHDFESHDGMTEENLYQKIFASHFGHLAIIFLWTSGNLFHVAWQGNFEQWVLNPLKVKPIAHAIWDPHFGQPALKAFSKGGSAYPVNIAYSGVYHWWYTIGMRSNQDLYSGALFLLVLSALLLFGGWLHLQPKFKPGLSWFKNNEPRLNHHLSGLFGVSSLARTGHLVHVAIPEARGQHVGWDNFTTVLPHPAGLQPFFSGNWSVYAQNPDTAQHLFGTNEGAGTAILTFLGGFHPQSQSLWLTDMAHHHLAIAVVFIVAGHMYRTNWGIGHNLKDILDAHRPPSGRLGAGHKGLFDTITNSLHIQLGLALASLGVITSLVAQHMYAMPPYAFMAKDFTTQASLYTHHQYIAGFLMVGAFAHGAIFFVRDYDPEQNKDNVLARMLEHKEAIISHLSWVTLFLGFHTLGLYVHNDTMIAFGTPEKQILIEPVFAQWIQASSGKALYGFDVLLSSSTNIATQAGSNIWLPGWLEAINSGKNSLFLTIGPGDFLVHHAIALGLHTTTLILVKGALDARGSKLMPDKKDFGYSFPCDGPGRGGTCDISAWDAFYLAVFWMLNTIGWVTFYWHWKHITIWQGNATQFNESSTYLMGWFRDYLWLNSSPLINGYNPYGMNNLSVWSWMFLFGHLVWATGFMFLISWRGYWQELIETLAWAHERTPLANLIRWKDKPVALSIVQARLVGLAHFSVGYVLTYAAFVLASTAGKFG.

A run of 8 helical transmembrane segments spans residues 46–69, 135–158, 175–199, 273–291, 330–353, 369–395, 417–439, and 517–535; these read IFAS…FHVA, LYSG…LHLQ, LNHH…HVAI, MAHH…GHMY, LHIQ…QHMY, ASLY…IFFV, AIIS…LYVH, and FLVH…LILV. [4Fe-4S] cluster contacts are provided by C559 and C568. 2 consecutive transmembrane segments (helical) span residues 575-596 and 643-665; these read AFYL…YWHW and LSVW…MFLI. H654, M662, and Y670 together coordinate chlorophyll a. W671 serves as a coordination point for phylloquinone. Residues 707–727 form a helical membrane-spanning segment; the sequence is LVGLAHFSVGYVLTYAAFVLA.

This sequence belongs to the PsaA/PsaB family. The PsaA/B heterodimer binds the P700 chlorophyll special pair and subsequent electron acceptors. PSI consists of a core antenna complex that captures photons, and an electron transfer chain that converts photonic excitation into a charge separation. The eukaryotic PSI reaction center is composed of at least 11 subunits. Requires P700 is a chlorophyll a/chlorophyll a' dimer, A0 is one or more chlorophyll a, A1 is one or both phylloquinones and FX is a shared 4Fe-4S iron-sulfur center. as cofactor.

Its subcellular location is the plastid. It localises to the chloroplast thylakoid membrane. It catalyses the reaction reduced [plastocyanin] + hnu + oxidized [2Fe-2S]-[ferredoxin] = oxidized [plastocyanin] + reduced [2Fe-2S]-[ferredoxin]. Functionally, psaA and PsaB bind P700, the primary electron donor of photosystem I (PSI), as well as the electron acceptors A0, A1 and FX. PSI is a plastocyanin/cytochrome c6-ferredoxin oxidoreductase, converting photonic excitation into a charge separation, which transfers an electron from the donor P700 chlorophyll pair to the spectroscopically characterized acceptors A0, A1, FX, FA and FB in turn. Oxidized P700 is reduced on the lumenal side of the thylakoid membrane by plastocyanin or cytochrome c6. The polypeptide is Photosystem I P700 chlorophyll a apoprotein A2 (Pyropia yezoensis (Susabi-nori)).